The chain runs to 161 residues: MNPRRQKRLGIILAILIGVSATIGLMIYALNQNMDLFYTPTELVNGKDDGTKPEVGQRLRIGGMVVMGSVRRDPESLKVRFDLADVGPKVTIEYEGILPDLFREGQGIVAQGVLKDATTVEAFEVLAKHDEEYMPPEIAEAMKKTHAPLQYSEEQKQGSGQ.

Over 1 to 8 (MNPRRQKR) the chain is Cytoplasmic. Residues 9–29 (LGIILAILIGVSATIGLMIYA) traverse the membrane as a helical; Signal-anchor for type II membrane protein segment. At 30-161 (LNQNMDLFYT…SEEQKQGSGQ (132 aa)) the chain is on the periplasmic side. 2 residues coordinate heme: H129 and Y133.

The protein belongs to the CcmE/CycJ family.

The protein resides in the cell inner membrane. Its function is as follows. Heme chaperone required for the biogenesis of c-type cytochromes. Transiently binds heme delivered by CcmC and transfers the heme to apo-cytochromes in a process facilitated by CcmF and CcmH. The chain is Cytochrome c-type biogenesis protein CcmE from Vibrio vulnificus (strain CMCP6).